The following is a 963-amino-acid chain: Putative RNA Helicase B962L (963 aa).

A Helicase ATP-binding domain is found at 43 to 229 (IPTSLADRVL…FGIGKENIIL (187 aa)). Position 56–63 (56–63 (SRTGSGKS)) interacts with ATP. The short motif at 167 to 170 (DEAH) is the DEAH box element. A Helicase C-terminal domain is found at 253-459 (ACETALTIHK…TIKKNKEGVF (207 aa)). Residues 521 to 541 (GYFWQAAISDIAIILAVVSVV) traverse the membrane as a helical segment.

It belongs to the DEAD box helicase family. DEAH subfamily.

It is found in the host membrane. The protein localises to the virion. It carries out the reaction ATP + H2O = ADP + phosphate + H(+). This is Putative RNA Helicase B962L from African swine fever virus (isolate Tick/Malawi/Lil 20-1/1983) (ASFV).